A 182-amino-acid polypeptide reads, in one-letter code: uncharacterized protein (182 aa).

An N-terminal signal peptide occupies residues Met1 to Gly26. The tract at residues Tyr68 to Thr90 is disordered. Residues Pro74–Thr90 show a composition bias toward low complexity.

This is an uncharacterized protein from Dryophytes versicolor (chameleon treefrog).